A 278-amino-acid polypeptide reads, in one-letter code: MSVPTVLEKILARKAEEVAERRARVSLAELEAQAKVADAPRGFANALIAQAKLKQPAVIAEVKKASPSKGVIREIFIPEDIAKSYEKGGATCLSVLTDIDYFQGSDLFLQQARAACKLPVIRKDFMVDPYQIVEARALGADCVLLIVSALDDVKMAELAAVAKSVGLDVLVEVHDGDELERALKTLDTPLVGVNNRNLHTFEVSLENTLDLLPRIPRDRLVITESGIVNRADVELMEISGVYSFLVGETFMRAENPGAELQRLFFPERGVAVSGSTLD.

It belongs to the TrpC family.

The enzyme catalyses 1-(2-carboxyphenylamino)-1-deoxy-D-ribulose 5-phosphate + H(+) = (1S,2R)-1-C-(indol-3-yl)glycerol 3-phosphate + CO2 + H2O. The protein operates within amino-acid biosynthesis; L-tryptophan biosynthesis; L-tryptophan from chorismate: step 4/5. In Pseudomonas fluorescens (strain SBW25), this protein is Indole-3-glycerol phosphate synthase.